Reading from the N-terminus, the 320-residue chain is 7-acetyl-epi-neemfruitin B aldo-keto reductase (320 aa).

Aspartate 51 contributes to the NADP(+) binding site. Tyrosine 56 (proton donor) is an active-site residue. NADP(+)-binding positions include glutamine 186 and phenylalanine 264–asparagine 272.

It belongs to the aldo/keto reductase family. As to expression, mainly expressed in petioles and, to a lower extent, in roots.

It catalyses the reaction 7-acetyl-epi-neemfruitin B + AH2 + H2O = (1S,3bR,4R,5aR,9aR,9bR,11aS)-1-[(4R)-5-[(2S)-3,3-dimethyloxiran-2-yl]-1,4-dihydroxybutan-2-yl]-3b,6,6,9a,11a-pentamethyl-7-oxo-1H,2H,3bH,4H,5H,5aH,6H,7H,9aH,9bH,10H,11H,11aH-cyclopenta[a]phenanthren-4-yl acetate + acetate + A + H(+). Its pathway is secondary metabolite biosynthesis; terpenoid biosynthesis. Aldo-keto reductase involved in the biosynthesis of limonoids triterpene natural products such as azadirachtin, an antifeedant widely used as bioinsecticide, and possessing many medicinal applications including anti-tumoral, anti-malarial, anti-rheumatic, antibacterial, anti-inflammatory, anti-pyretic and diuretic effects. Can use 7-acetyl-epi-neemfruitin B as substrate. The polypeptide is 7-acetyl-epi-neemfruitin B aldo-keto reductase (Melia azedarach (Chinaberry tree)).